Reading from the N-terminus, the 380-residue chain is MRYSLFLEFFFVFVLTCSLDVICYKRTSSLNLVTDIKQIKNKSIHKRNRLYSSNENLKRLKYIREVTNASIQVCNDALKECNNDVDKAIELVRKNTKNGSFISTSVKTQKEGLICSDIMDDKIVLIELLTDSDFVARNNKFVTFLKNISKLCLHNEIIPPNIDVNDSVENFDTSLVAIDKIMQSPYTNSNGEINGTVSEELNYLRNIFREDIKIGRFSKYIKKNENEFLHYYIHNIVDGNNVGLSGVMLVIEIDNLNEKLKTKEKDIISFANDLCMHIISAKPVSVSIDKVNQNVVKKEMDIIRDSLKDLNKPENIITNMINGKMKKFYSNVVLLEQEYMLDDTKRKVSQVIKDFSKNNDLTINVKHFDNFIVGEKNILV.

Belongs to the EF-Ts family.

The protein localises to the mitochondrion. In terms of biological role, associates with the EF-Tu.GDP complex and induces the exchange of GDP to GTP. It remains bound to the aminoacyl-tRNA.EF-Tu.GTP complex up to the GTP hydrolysis stage on the ribosome. The sequence is that of Elongation factor Ts, mitochondrial from Plasmodium chabaudi chabaudi.